The following is an 81-amino-acid chain: Small ribosomal subunit protein bS16 (81 aa).

The protein belongs to the bacterial ribosomal protein bS16 family.

The protein is Small ribosomal subunit protein bS16 of Colwellia psychrerythraea (strain 34H / ATCC BAA-681) (Vibrio psychroerythus).